The primary structure comprises 234 residues: Leucyl/phenylalanyl-tRNA--protein transferase (234 aa).

Belongs to the L/F-transferase family.

Its subcellular location is the cytoplasm. It carries out the reaction N-terminal L-lysyl-[protein] + L-leucyl-tRNA(Leu) = N-terminal L-leucyl-L-lysyl-[protein] + tRNA(Leu) + H(+). The catalysed reaction is N-terminal L-arginyl-[protein] + L-leucyl-tRNA(Leu) = N-terminal L-leucyl-L-arginyl-[protein] + tRNA(Leu) + H(+). It catalyses the reaction L-phenylalanyl-tRNA(Phe) + an N-terminal L-alpha-aminoacyl-[protein] = an N-terminal L-phenylalanyl-L-alpha-aminoacyl-[protein] + tRNA(Phe). In terms of biological role, functions in the N-end rule pathway of protein degradation where it conjugates Leu, Phe and, less efficiently, Met from aminoacyl-tRNAs to the N-termini of proteins containing an N-terminal arginine or lysine. The polypeptide is Leucyl/phenylalanyl-tRNA--protein transferase (Dechloromonas aromatica (strain RCB)).